A 49-amino-acid polypeptide reads, in one-letter code: Omega-segestritoxin-Sf1a (49 aa).

4 cysteine pairs are disulfide-bonded: Cys-3-Cys-22, Cys-10-Cys-27, Cys-21-Cys-48, and Cys-29-Cys-46.

In terms of tissue distribution, expressed by the venom gland.

The protein localises to the secreted. Potent and selective blocker of N-type voltage-gated calcium channels (Cav2.2/CACNA1B). Also blocks vertebrate Cav2.1/CACNA1A (P/Q-type) and Cav1.2/CACNA1C (L-type) channels at very high concentration (2 micromolar). This chain is Omega-segestritoxin-Sf1a, found in Segestria florentina (Tube-web spider).